A 471-amino-acid chain; its full sequence is Glutamate--tRNA ligase (471 aa).

The 'HIGH' region signature appears at 9 to 19 (PSPTGYLHVGG). Positions 98, 100, 125, and 127 each coordinate Zn(2+). Positions 237 to 241 (KLSKR) match the 'KMSKS' region motif. Lys-240 is an ATP binding site.

Belongs to the class-I aminoacyl-tRNA synthetase family. Glutamate--tRNA ligase type 1 subfamily. In terms of assembly, monomer. It depends on Zn(2+) as a cofactor.

The protein resides in the cytoplasm. The catalysed reaction is tRNA(Glu) + L-glutamate + ATP = L-glutamyl-tRNA(Glu) + AMP + diphosphate. In terms of biological role, catalyzes the attachment of glutamate to tRNA(Glu) in a two-step reaction: glutamate is first activated by ATP to form Glu-AMP and then transferred to the acceptor end of tRNA(Glu). This Escherichia coli O157:H7 protein is Glutamate--tRNA ligase.